The primary structure comprises 112 residues: UPF0212 protein Mhun_0078 (112 aa).

This sequence belongs to the UPF0212 family.

This Methanospirillum hungatei JF-1 (strain ATCC 27890 / DSM 864 / NBRC 100397 / JF-1) protein is UPF0212 protein Mhun_0078.